A 728-amino-acid polypeptide reads, in one-letter code: MSDRIDRDVINALIAGHFADPFSVLGMHKTTAGLEVRALLPDATDVWVIEPKTGRKLAKLECLDSRGFFSGVIPRRKNFFRYQLAVVWHGQQNLIDDPYRFGPLIQEMDAWLLSEGTHLRPYETLGAHADTMDGVTGTRFSVWAPNARRVSVVGQFNYWDGRRHPMRLRKESGIWELFIPGAHNGQLYKYEMIDANGNLRLKSDPYAFEAQMRPETASLICGLPEKVVQTEERKKANQFDAPISIYEVHLGSWRRHTDNNFWLSYRELADQLVPYAKWMGFTHLELLPINEHPFDGSWGYQPTGLYAPTRRFGTRDDFRYFIDAAHAAGLNVILDWVPGHFPTDDFALAEFDGTNLYEHSDPREGYHQDWNTLIYNYGRREVSNFLVGNALYWIERFGIDALRVDAVASMIYRDYSRKEGEWIPNEFGGRENLEAIEFLRNTNRILGEQVSGAVTMAEESTDFPGVSRPQDMGGLGFWYKWNLGWMHDTLDYMKLDPVYRQYHHDKLTFGILYNYTENFVLPLSHDEVVHGKKSILDRMPGDAWQKFANLRAYYGWMWAFPGKKLLFMGNEFAQGREWNHDASLDWHLLEGGDNWHHGVQRLVRDLNLTYRHHKAMHELDFDPYGFEWLVVDDKERSVLIFVRRDKEGNEIIVASNFTPVPRHDYRFGINQPGKWREILNTDSMHYHGSNAGNGGTVHSDEIASHGRQHSLSLTLPPLATIWLVREAE.

Asp-405 functions as the Nucleophile in the catalytic mechanism. Residue Glu-458 is the Proton donor of the active site.

This sequence belongs to the glycosyl hydrolase 13 family. GlgB subfamily. Monomer.

The enzyme catalyses Transfers a segment of a (1-&gt;4)-alpha-D-glucan chain to a primary hydroxy group in a similar glucan chain.. It participates in glycan biosynthesis; glycogen biosynthesis. Catalyzes the formation of the alpha-1,6-glucosidic linkages in glycogen by scission of a 1,4-alpha-linked oligosaccharide from growing alpha-1,4-glucan chains and the subsequent attachment of the oligosaccharide to the alpha-1,6 position. This Escherichia coli O139:H28 (strain E24377A / ETEC) protein is 1,4-alpha-glucan branching enzyme GlgB.